A 155-amino-acid chain; its full sequence is 6,7-dimethyl-8-ribityllumazine synthase (155 aa).

5-amino-6-(D-ribitylamino)uracil is bound by residues Trp-23, 57–59 (AWE), and 81–83 (CVI). 86-87 (DT) is a (2S)-2-hydroxy-3-oxobutyl phosphate binding site. The Proton donor role is filled by His-89. 5-amino-6-(D-ribitylamino)uracil is bound at residue Asn-114. Residue Arg-128 participates in (2S)-2-hydroxy-3-oxobutyl phosphate binding.

It belongs to the DMRL synthase family. As to quaternary structure, forms an icosahedral capsid composed of 60 subunits, arranged as a dodecamer of pentamers.

The catalysed reaction is (2S)-2-hydroxy-3-oxobutyl phosphate + 5-amino-6-(D-ribitylamino)uracil = 6,7-dimethyl-8-(1-D-ribityl)lumazine + phosphate + 2 H2O + H(+). It participates in cofactor biosynthesis; riboflavin biosynthesis; riboflavin from 2-hydroxy-3-oxobutyl phosphate and 5-amino-6-(D-ribitylamino)uracil: step 1/2. In terms of biological role, catalyzes the formation of 6,7-dimethyl-8-ribityllumazine by condensation of 5-amino-6-(D-ribitylamino)uracil with 3,4-dihydroxy-2-butanone 4-phosphate. This is the penultimate step in the biosynthesis of riboflavin. This chain is 6,7-dimethyl-8-ribityllumazine synthase, found in Stenotrophomonas maltophilia (strain K279a).